The following is a 905-amino-acid chain: Heme/hemopexin-binding protein (905 aa).

The first 21 residues, 1-21 (MYKLNVISLIILTTYTGATYA), serve as a signal peptide directing secretion.

It is found in the secreted. In terms of biological role, binds heme/hemopexin complexes. The sequence is that of Heme/hemopexin-binding protein (hxuA) from Haemophilus influenzae (strain ATCC 51907 / DSM 11121 / KW20 / Rd).